An 89-amino-acid chain; its full sequence is Bombyxin B-1 (89 aa).

A signal peptide spans 1–19 (MKTSVMFMLVIVISLMCSG). 3 disulfides stabilise this stretch: Cys29–Cys75, Cys41–Cys88, and Cys74–Cys79. Positions 48–66 (GGAQYAPYFWTRQYLGSRG) are cleaved as a propeptide — c peptide like.

The protein belongs to the insulin family. In terms of assembly, heterodimer of a B chain and an A chain linked by two disulfide bonds.

It localises to the secreted. Functionally, brain peptide responsible for activation of prothoracic glands to produce ecdysone in insects. In Bombyx mori (Silk moth), this protein is Bombyxin B-1 (BBXB1).